We begin with the raw amino-acid sequence, 259 residues long: MYELKKSKKSKARFFSTTSTYFSYRKHQLFKFYIPKNPSRNNTGKVSMRCKRKKFKNLDLAINYARIEMGRNCLITKLSFWKEKKPYVALVRDSYNSLSYYIAPAGFFVGRTLKTLPTKHDYYKKGGWKFYIRGLGTYVMLRVLRVNDVIFNLLSPSRVLYRLALAAGTYFKILYQSFCKTFYVMTIPSGLIIRVPSEGLAVMGRNSNTQNNKRVLGLAGVNFFNGTNPRVRGVAMNPVDHPNGGRTKTPKPERSPGVE.

A disordered region spans residues 234–259 (VAMNPVDHPNGGRTKTPKPERSPGVE). Residues 250 to 259 (PKPERSPGVE) show a composition bias toward basic and acidic residues.

It belongs to the universal ribosomal protein uL2 family.

Its subcellular location is the mitochondrion. This Paramecium tetraurelia protein is Large ribosomal subunit protein uL2m (RPL2).